The chain runs to 809 residues: Plasminogen (809 aa).

The N-terminal stretch at 1 to 19 is a signal peptide; it reads MDHKEVVLLLLLFLKSGLG. The PAN domain maps to 20–98; it reads DSLDDYVNTQ…RDVVLFEKRI (79 aa). Intrachain disulfides connect cysteine 49/cysteine 73, cysteine 53/cysteine 61, cysteine 103/cysteine 181, cysteine 124/cysteine 164, cysteine 152/cysteine 176, cysteine 185/cysteine 262, cysteine 188/cysteine 316, cysteine 206/cysteine 245, cysteine 234/cysteine 257, cysteine 275/cysteine 352, cysteine 296/cysteine 335, cysteine 324/cysteine 347, cysteine 377/cysteine 454, cysteine 398/cysteine 437, cysteine 426/cysteine 449, cysteine 480/cysteine 559, cysteine 501/cysteine 542, cysteine 530/cysteine 554, cysteine 566/cysteine 684, cysteine 576/cysteine 584, cysteine 606/cysteine 622, cysteine 698/cysteine 765, cysteine 728/cysteine 744, and cysteine 755/cysteine 783. Kringle domains are found at residues 103–181 and 185–262; these read CKTG…IPEC and CMHC…IPRC. O-linked (GalNAc...) threonine glycosylation occurs at threonine 268. Kringle domains lie at 275–352, 377–454, and 480–559; these read CLKG…IPSC, CYRG…LKKC, and CMFG…VPQC. The N-linked (GlcNAc...) asparagine glycan is linked to asparagine 308. The Peptidase S1 domain maps to 580–807; that stretch reads VVGGCVSIPH…FVTWIEEIMR (228 aa). The residue at position 596 (serine 596) is a Phosphoserine. Residues histidine 621 and aspartate 664 each act as charge relay system in the active site. Serine 759 acts as the Charge relay system in catalysis.

Belongs to the peptidase S1 family. Plasminogen subfamily. As to quaternary structure, interacts with CSPG4 and AMOT. Interacts (via the Kringle domains) with HRG; the interaction tethers PLG to the cell surface and enhances its activation. Interacts (via Kringle 4 domain) with ADA; the interaction stimulates PLG activation when in complex with DPP4. Angiostatin: Interacts with ATP5F1A; the interaction inhibits most of the angiogenic effects of angiostatin. Post-translationally, N-linked glycan contains N-acetyllactosamine, sialic acid and is core fucosylated. O-linked glycans consist of Gal-GalNAc disaccharide which is modified with up to 2 sialic acid residues (microheterogeneity). In terms of processing, in the presence of the inhibitor, the activation involves only cleavage after Arg-579, yielding two chains held together by two disulfide bonds. In the absence of the inhibitor, the activation involves additionally the removal of the activation peptide.

The protein resides in the secreted. The enzyme catalyses Preferential cleavage: Lys-|-Xaa &gt; Arg-|-Xaa, higher selectivity than trypsin. Converts fibrin into soluble products.. With respect to regulation, converted into plasmin by plasminogen activators, both plasminogen and its activator being bound to fibrin. Cannot be activated with streptokinase. Functionally, plasmin dissolves the fibrin of blood clots and acts as a proteolytic factor in a variety of other processes including embryonic development, tissue remodeling, tumor invasion, and inflammation. In ovulation, weakens the walls of the Graafian follicle. It activates the urokinase-type plasminogen activator, collagenases and several complement zymogens, such as C1, C4 and C5. Cleavage of fibronectin and laminin leads to cell detachment and apoptosis. Also cleaves fibrin, thrombospondin and von Willebrand factor. Its role in tissue remodeling and tumor invasion may be modulated by CSPG4. Binds to cells. This chain is Plasminogen (PLG), found in Sus scrofa (Pig).